We begin with the raw amino-acid sequence, 485 residues long: NADH-quinone oxidoreductase subunit N (485 aa).

Helical transmembrane passes span 8–28 (LIAL…MLSI), 35–55 (FVNA…LYFV), 75–95 (FYTG…YPWL), 105–125 (FYLL…ASHL), 127–147 (SLFI…GYAF), 159–179 (YTIL…LVYA), 203–223 (LLAG…LVPF), 235–255 (PAPV…GVLM), 271–291 (TVLG…AISQ), 297–317 (LLGY…IAVQ), 326–346 (VGVY…VVSL), 373–393 (AAVM…LGFI), 408–427 (WWLT…YYLR), and 449–469 (AFTA…VLGI).

Belongs to the complex I subunit 2 family. In terms of assembly, NDH-1 is composed of 13 different subunits. Subunits NuoA, H, J, K, L, M, N constitute the membrane sector of the complex.

It is found in the cell inner membrane. The enzyme catalyses a quinone + NADH + 5 H(+)(in) = a quinol + NAD(+) + 4 H(+)(out). In terms of biological role, NDH-1 shuttles electrons from NADH, via FMN and iron-sulfur (Fe-S) centers, to quinones in the respiratory chain. The immediate electron acceptor for the enzyme in this species is believed to be ubiquinone. Couples the redox reaction to proton translocation (for every two electrons transferred, four hydrogen ions are translocated across the cytoplasmic membrane), and thus conserves the redox energy in a proton gradient. The chain is NADH-quinone oxidoreductase subunit N from Erwinia tasmaniensis (strain DSM 17950 / CFBP 7177 / CIP 109463 / NCPPB 4357 / Et1/99).